The primary structure comprises 72 residues: Translation initiation factor IF-1 (72 aa).

The S1-like domain maps to 1–72 (MAKEDVIEIE…TRGRITYRFK (72 aa)).

The protein belongs to the IF-1 family. Component of the 30S ribosomal translation pre-initiation complex which assembles on the 30S ribosome in the order IF-2 and IF-3, IF-1 and N-formylmethionyl-tRNA(fMet); mRNA recruitment can occur at any time during PIC assembly.

Its subcellular location is the cytoplasm. Its function is as follows. One of the essential components for the initiation of protein synthesis. Stabilizes the binding of IF-2 and IF-3 on the 30S subunit to which N-formylmethionyl-tRNA(fMet) subsequently binds. Helps modulate mRNA selection, yielding the 30S pre-initiation complex (PIC). Upon addition of the 50S ribosomal subunit IF-1, IF-2 and IF-3 are released leaving the mature 70S translation initiation complex. In Streptococcus agalactiae serotype Ia (strain ATCC 27591 / A909 / CDC SS700), this protein is Translation initiation factor IF-1.